A 386-amino-acid polypeptide reads, in one-letter code: Succinate--CoA ligase [ADP-forming] subunit beta (386 aa).

In terms of domain architecture, ATP-grasp spans 9 to 237 (KEVLRDFGVN…LSAEHPLEVE (229 aa)). Residues Lys45, 52-54 (GRG), Val94, and Glu101 contribute to the ATP site. Residues Asn192 and Asp206 each contribute to the Mg(2+) site. Substrate contacts are provided by residues Asn258 and 315 to 317 (GIT).

This sequence belongs to the succinate/malate CoA ligase beta subunit family. As to quaternary structure, heterotetramer of two alpha and two beta subunits. Mg(2+) serves as cofactor.

It carries out the reaction succinate + ATP + CoA = succinyl-CoA + ADP + phosphate. The enzyme catalyses GTP + succinate + CoA = succinyl-CoA + GDP + phosphate. It participates in carbohydrate metabolism; tricarboxylic acid cycle; succinate from succinyl-CoA (ligase route): step 1/1. In terms of biological role, succinyl-CoA synthetase functions in the citric acid cycle (TCA), coupling the hydrolysis of succinyl-CoA to the synthesis of either ATP or GTP and thus represents the only step of substrate-level phosphorylation in the TCA. The beta subunit provides nucleotide specificity of the enzyme and binds the substrate succinate, while the binding sites for coenzyme A and phosphate are found in the alpha subunit. In Deinococcus radiodurans (strain ATCC 13939 / DSM 20539 / JCM 16871 / CCUG 27074 / LMG 4051 / NBRC 15346 / NCIMB 9279 / VKM B-1422 / R1), this protein is Succinate--CoA ligase [ADP-forming] subunit beta.